Reading from the N-terminus, the 1586-residue chain is Pentafunctional AROM polypeptide (1586 aa).

Positions 1–384 (MSEPTKISIL…HEPKASVVSN (384 aa)) are 3-dehydroquinate synthase. NAD(+) is bound by residues 44-46 (DTN), 81-84 (ESSK), 114-116 (GGV), and Asp119. Arg130 is a 7-phospho-2-dehydro-3-deoxy-D-arabino-heptonate binding site. Position 139 to 140 (139 to 140 (TT)) interacts with NAD(+). Residues Asp146 and Lys152 each coordinate 7-phospho-2-dehydro-3-deoxy-D-arabino-heptonate. Lys161 serves as a coordination point for NAD(+). Asn162 contributes to the 7-phospho-2-dehydro-3-deoxy-D-arabino-heptonate binding site. NAD(+) contacts are provided by residues 179 to 182 (FLET) and Asn190. Residue Glu194 participates in Zn(2+) binding. Residues 194 to 197 (EVIK) and Lys250 contribute to the 7-phospho-2-dehydro-3-deoxy-D-arabino-heptonate site. Glu260 serves as the catalytic Proton acceptor; for 3-dehydroquinate synthase activity. Residues 264 to 268 (RNLLN) and His271 each bind 7-phospho-2-dehydro-3-deoxy-D-arabino-heptonate. His271 provides a ligand contact to Zn(2+). Residue His275 is the Proton acceptor; for 3-dehydroquinate synthase activity of the active site. Positions 287 and 356 each coordinate 7-phospho-2-dehydro-3-deoxy-D-arabino-heptonate. Zn(2+) is bound at residue His287. The interval 397 to 842 (VHPGVPKSLN…WDALKQMFSV (446 aa)) is EPSP synthase. The active-site For EPSP synthase activity is Cys824. Residues 864–1056 (SASVFIIGMR…KKKKHSFFVS (193 aa)) form a shikimate kinase region. Position 871–878 (871–878 (GMRGAGKT)) interacts with ATP. A 3-dehydroquinase region spans residues 1057–1277 (LTLPDVEPSG…AAPGQLSAAE (221 aa)). His1180 serves as the catalytic Proton acceptor; for 3-dehydroquinate dehydratase activity. Lys1208 (schiff-base intermediate with substrate; for 3-dehydroquinate dehydratase activity) is an active-site residue. The shikimate dehydrogenase stretch occupies residues 1290 to 1586 (AQKFAIFGSP…SKHLDYFLSF (297 aa)).

In the N-terminal section; belongs to the sugar phosphate cyclases superfamily. Dehydroquinate synthase family. The protein in the 2nd section; belongs to the EPSP synthase family. It in the 3rd section; belongs to the shikimate kinase family. This sequence in the 4th section; belongs to the type-I 3-dehydroquinase family. In the C-terminal section; belongs to the shikimate dehydrogenase family. As to quaternary structure, homodimer. Zn(2+) serves as cofactor.

It localises to the cytoplasm. The enzyme catalyses 7-phospho-2-dehydro-3-deoxy-D-arabino-heptonate = 3-dehydroquinate + phosphate. It catalyses the reaction 3-dehydroquinate = 3-dehydroshikimate + H2O. It carries out the reaction shikimate + NADP(+) = 3-dehydroshikimate + NADPH + H(+). The catalysed reaction is shikimate + ATP = 3-phosphoshikimate + ADP + H(+). The enzyme catalyses 3-phosphoshikimate + phosphoenolpyruvate = 5-O-(1-carboxyvinyl)-3-phosphoshikimate + phosphate. It functions in the pathway metabolic intermediate biosynthesis; chorismate biosynthesis; chorismate from D-erythrose 4-phosphate and phosphoenolpyruvate: step 2/7. Its pathway is metabolic intermediate biosynthesis; chorismate biosynthesis; chorismate from D-erythrose 4-phosphate and phosphoenolpyruvate: step 3/7. The protein operates within metabolic intermediate biosynthesis; chorismate biosynthesis; chorismate from D-erythrose 4-phosphate and phosphoenolpyruvate: step 4/7. It participates in metabolic intermediate biosynthesis; chorismate biosynthesis; chorismate from D-erythrose 4-phosphate and phosphoenolpyruvate: step 5/7. It functions in the pathway metabolic intermediate biosynthesis; chorismate biosynthesis; chorismate from D-erythrose 4-phosphate and phosphoenolpyruvate: step 6/7. Functionally, the AROM polypeptide catalyzes 5 consecutive enzymatic reactions in prechorismate polyaromatic amino acid biosynthesis. The chain is Pentafunctional AROM polypeptide from Penicillium rubens (strain ATCC 28089 / DSM 1075 / NRRL 1951 / Wisconsin 54-1255) (Penicillium chrysogenum).